A 72-amino-acid polypeptide reads, in one-letter code: Translation initiation factor IF-1 (72 aa).

An S1-like domain is found at 1-72; the sequence is MAKEDCIEME…SKGRIIYRAR (72 aa).

The protein belongs to the IF-1 family. As to quaternary structure, component of the 30S ribosomal translation pre-initiation complex which assembles on the 30S ribosome in the order IF-2 and IF-3, IF-1 and N-formylmethionyl-tRNA(fMet); mRNA recruitment can occur at any time during PIC assembly.

It is found in the cytoplasm. In terms of biological role, one of the essential components for the initiation of protein synthesis. Stabilizes the binding of IF-2 and IF-3 on the 30S subunit to which N-formylmethionyl-tRNA(fMet) subsequently binds. Helps modulate mRNA selection, yielding the 30S pre-initiation complex (PIC). Upon addition of the 50S ribosomal subunit IF-1, IF-2 and IF-3 are released leaving the mature 70S translation initiation complex. In Pseudoalteromonas atlantica (strain T6c / ATCC BAA-1087), this protein is Translation initiation factor IF-1.